A 201-amino-acid polypeptide reads, in one-letter code: Adenylyl-sulfate kinase (201 aa).

Residue 35 to 42 (GLSGSGKS) participates in ATP binding. Residue serine 109 is the Phosphoserine intermediate of the active site.

This sequence belongs to the APS kinase family.

The catalysed reaction is adenosine 5'-phosphosulfate + ATP = 3'-phosphoadenylyl sulfate + ADP + H(+). It functions in the pathway sulfur metabolism; hydrogen sulfide biosynthesis; sulfite from sulfate: step 2/3. In terms of biological role, catalyzes the synthesis of activated sulfate. In Bacteroides thetaiotaomicron (strain ATCC 29148 / DSM 2079 / JCM 5827 / CCUG 10774 / NCTC 10582 / VPI-5482 / E50), this protein is Adenylyl-sulfate kinase.